The following is a 648-amino-acid chain: DNA gyrase subunit B (648 aa).

Positions 432–546 (RELFIVEGNS…YGFVYLAQPP (115 aa)) constitute a Toprim domain. Residues E438, D511, and D513 each coordinate Mg(2+).

This sequence belongs to the type II topoisomerase GyrB family. As to quaternary structure, heterotetramer, composed of two GyrA and two GyrB chains. In the heterotetramer, GyrA contains the active site tyrosine that forms a transient covalent intermediate with DNA, while GyrB binds cofactors and catalyzes ATP hydrolysis. Mg(2+) is required as a cofactor. Requires Mn(2+) as cofactor. It depends on Ca(2+) as a cofactor.

The protein resides in the cytoplasm. It carries out the reaction ATP-dependent breakage, passage and rejoining of double-stranded DNA.. Its function is as follows. A type II topoisomerase that negatively supercoils closed circular double-stranded (ds) DNA in an ATP-dependent manner to modulate DNA topology and maintain chromosomes in an underwound state. Negative supercoiling favors strand separation, and DNA replication, transcription, recombination and repair, all of which involve strand separation. Also able to catalyze the interconversion of other topological isomers of dsDNA rings, including catenanes and knotted rings. Type II topoisomerases break and join 2 DNA strands simultaneously in an ATP-dependent manner. The protein is DNA gyrase subunit B of Metamycoplasma hominis (strain ATCC 23114 / DSM 25592 / NBRC 14850 / NCTC 10111 / PG21) (Mycoplasma hominis).